The sequence spans 254 residues: Fasciclin-like arabinogalactan protein 7 (254 aa).

An N-terminal signal peptide occupies residues 1–22; it reads MAKMQLSIFIAVVALIVCSASA. The 143-residue stretch at 44–186 folds into the FAS1 domain; sequence NVNLTELLSV…VAVYQVNRVL (143 aa). Asn-46, Asn-78, Asn-104, and Asn-130 each carry an N-linked (GlcNAc...) asparagine glycan. The interval 203–233 is disordered; it reads APAPIVSAPSDSPSVADSEGASSPKSSHKNS. Over residues 206–220 the composition is skewed to low complexity; that stretch reads PIVSAPSDSPSVADS. Polar residues predominate over residues 222-233; sequence GASSPKSSHKNS. The GPI-anchor amidated asparagine moiety is linked to residue Asn-232. Positions 233 to 254 are cleaved as a propeptide — removed in mature form; it reads SGQKLLLAPISMVISGLVALFL.

It belongs to the fasciclin-like AGP family.

It localises to the cell membrane. Functionally, may be a cell surface adhesion protein. In Arabidopsis thaliana (Mouse-ear cress), this protein is Fasciclin-like arabinogalactan protein 7 (FLA7).